The sequence spans 150 residues: Avidin-related protein 3 (150 aa).

Positions 1 to 24 are cleaved as a signal peptide; the sequence is MVHTTSPLLLLLLLSLALVAPSLS. Residues 26–147 form the Avidin-like domain; the sequence is RKCSLTGKWT…GYNNFTRQRT (122 aa). The cysteines at positions 28 and 105 are disulfide-linked. Positions 36, 40, 57, 59, and 63 each coordinate biotin. Residue Asn-93 is glycosylated (N-linked (GlcNAc...) asparagine). Biotin-binding residues include Ser-95, Ser-99, and Asn-140. Asn-141 is a glycosylation site (N-linked (GlcNAc...) asparagine).

Belongs to the avidin/streptavidin family. In terms of assembly, homotetramer. Post-translationally, glycosylated.

It is found in the secreted. Functionally, forms a strong non-covalent specific complex with biotin. This Gallus gallus (Chicken) protein is Avidin-related protein 3 (AVR3).